The chain runs to 194 residues: tRNA (guanosine(18)-2'-O)-methyltransferase (194 aa).

Residues T99, 122 to 126 (GAEKW), I142, and L151 each bind S-adenosyl-L-methionine.

Belongs to the class IV-like SAM-binding methyltransferase superfamily. RNA methyltransferase TrmH family. In terms of assembly, monomer.

The catalysed reaction is guanosine(18) in tRNA + S-adenosyl-L-methionine = 2'-O-methylguanosine(18) in tRNA + S-adenosyl-L-homocysteine + H(+). With respect to regulation, stimulated by magnesium ions and spermine. Inhibited by S-adenosyl-homocysteine. Catalyzes the 2'-O methylation of guanosine at position 18 in tRNA. The sequence is that of tRNA (guanosine(18)-2'-O)-methyltransferase from Thermus thermophilus (strain ATCC BAA-163 / DSM 7039 / HB27).